The following is a 423-amino-acid chain: Peroxisome biogenesis factor 2 (423 aa).

Residues 1 to 26 are compositionally biased toward low complexity; the sequence is MVDNYNNNNILPTNTSTTTTTNTTIT. The tract at residues 1–46 is disordered; the sequence is MVDNYNNNNILPTNTSTTTTTNTTITPTPPLPPPPPISNILDNNNN. At 1-109 the chain is on the peroxisomal matrix side; that stretch reads MVDNYNNNNI…NIKRPSTSIV (109 aa). A compositionally biased stretch (pro residues) spans 27-37; it reads PTPPLPPPPPI. The chain crosses the membrane as a helical span at residues 110–136; sequence RVSQLDSARLDEEILDLLRSQFMKIFT. The Cytoplasmic segment spans residues 137 to 142; the sequence is FFKPNF. Residues 143-168 form a helical membrane-spanning segment; the sequence is IHNFQPEINLVLKSVIYKLSIFNLGT. The Peroxisomal matrix portion of the chain corresponds to 169 to 197; it reads TYGNQLQNLTYRNEKAFDPIRGSDQLNKL. A helical transmembrane segment spans residues 198-224; sequence TMRQKWLSGLINIGGEWLWTRINRYLI. At 225 to 234 the chain is on the cytoplasmic side; the sequence is NNNWSEHPPN. The chain crosses the membrane as a helical span at residues 235–265; that stretch reads DIRKKFWNFLNFAESAYKALALLNFLTFLFN. At 266 to 292 the chain is on the peroxisomal matrix side; sequence GKYVTLVNRILHMRLVYAHPTLSRNIS. Residues 293–316 form a helical membrane-spanning segment; sequence FEYMNRLLVWHGFTEFILFIMPLI. The Cytoplasmic portion of the chain corresponds to 317–423; the sequence is NIDRIKSFLY…SNIKRFSIQD (107 aa). Cysteine 369, cysteine 372, cysteine 385, histidine 387, cysteine 390, cysteine 393, cysteine 406, and cysteine 409 together coordinate Zn(2+). The segment at 369–410 adopts an RING-type zinc-finger fold; the sequence is CPICMNDPISMPYSADCGHLFCYYCIKTSCMIDSSFTCPRCN.

Belongs to the pex2/pex10/pex12 family. As to quaternary structure, component of the PEX2-PEX10-PEX12 retrotranslocation channel.

Its subcellular location is the peroxisome membrane. The enzyme catalyses [E2 ubiquitin-conjugating enzyme]-S-ubiquitinyl-L-cysteine + [acceptor protein]-L-cysteine = [E2 ubiquitin-conjugating enzyme]-L-cysteine + [acceptor protein]-S-ubiquitinyl-L-cysteine.. The protein operates within protein modification; protein ubiquitination. E3 ubiquitin-protein ligase component of a retrotranslocation channel required for peroxisome organization by mediating export of the PEX5 receptor from peroxisomes to the cytosol, thereby promoting PEX5 recycling. The retrotranslocation channel is composed of PEX2, PEX10 and PEX12; each subunit contributing transmembrane segments that coassemble into an open channel that specifically allows the passage of PEX5 through the peroxisomal membrane. PEX2 also regulates peroxisome organization by acting as a E3 ubiquitin-protein ligase. PEX2 ubiquitinates PEX5 during its passage through the retrotranslocation channel: catalyzes monoubiquitination of PEX5 at 'Cys-11', a modification that acts as a signal for PEX5 extraction into the cytosol. The sequence is that of Peroxisome biogenesis factor 2 (pex2) from Dictyostelium discoideum (Social amoeba).